A 157-amino-acid chain; its full sequence is MAVKIKLQRLGKIRTPHYRVIVADSRTRRSGRAIENLGIYEPKADPSVIRIDSDRVQYWLGVGAQPTEPVLALLKVTGDWQKFKGLPGAEGTLKAQPEKKSKLDLFNEALAEANNGPTLEAITEKRKAAKKAAEEAAAKEAEAEEAAEDKAEEESAE.

Positions 125-141 (KRKAAKKAAEEAAAKEA) are enriched in basic and acidic residues. A disordered region spans residues 125-157 (KRKAAKKAAEEAAAKEAEAEEAAEDKAEEESAE). Residues 142 to 157 (EAEEAAEDKAEEESAE) show a composition bias toward acidic residues.

The protein belongs to the bacterial ribosomal protein bS16 family.

The polypeptide is Small ribosomal subunit protein bS16 (Corynebacterium kroppenstedtii (strain DSM 44385 / JCM 11950 / CIP 105744 / CCUG 35717)).